An 88-amino-acid polypeptide reads, in one-letter code: LYR motif-containing protein 2 (88 aa).

A mitochondrion-targeting transit peptide spans 1–19 (MAASRLPPATLTLKQFVRR).

This sequence belongs to the complex I LYR family.

It localises to the mitochondrion. Its function is as follows. Involved in efficient integration of the N-module into mitochondrial respiratory chain complex I. The sequence is that of LYR motif-containing protein 2 (LYRM2) from Homo sapiens (Human).